The chain runs to 70 residues: Cytochrome c oxidase subunit 8B, mitochondrial (70 aa).

The N-terminal 24 residues, Met-1–His-24, are a transit peptide targeting the mitochondrion. Over Val-25–Ser-35 the chain is Mitochondrial matrix. The helical transmembrane segment at Pro-36–Ser-59 threads the bilayer. Topologically, residues His-60 to Thr-70 are mitochondrial intermembrane.

The protein belongs to the cytochrome c oxidase VIII family. As to quaternary structure, component of the cytochrome c oxidase (complex IV, CIV), a multisubunit enzyme composed of 14 subunits. The complex is composed of a catalytic core of 3 subunits MT-CO1, MT-CO2 and MT-CO3, encoded in the mitochondrial DNA, and 11 supernumerary subunits COX4I, COX5A, COX5B, COX6A, COX6B, COX6C, COX7A, COX7B, COX7C, COX8 and NDUFA4, which are encoded in the nuclear genome. The complex exists as a monomer or a dimer and forms supercomplexes (SCs) in the inner mitochondrial membrane with NADH-ubiquinone oxidoreductase (complex I, CI) and ubiquinol-cytochrome c oxidoreductase (cytochrome b-c1 complex, complex III, CIII), resulting in different assemblies (supercomplex SCI(1)III(2)IV(1) and megacomplex MCI(2)III(2)IV(2)).

Its subcellular location is the mitochondrion inner membrane. The protein operates within energy metabolism; oxidative phosphorylation. In terms of biological role, component of the cytochrome c oxidase, the last enzyme in the mitochondrial electron transport chain which drives oxidative phosphorylation. The respiratory chain contains 3 multisubunit complexes succinate dehydrogenase (complex II, CII), ubiquinol-cytochrome c oxidoreductase (cytochrome b-c1 complex, complex III, CIII) and cytochrome c oxidase (complex IV, CIV), that cooperate to transfer electrons derived from NADH and succinate to molecular oxygen, creating an electrochemical gradient over the inner membrane that drives transmembrane transport and the ATP synthase. Cytochrome c oxidase is the component of the respiratory chain that catalyzes the reduction of oxygen to water. Electrons originating from reduced cytochrome c in the intermembrane space (IMS) are transferred via the dinuclear copper A center (CU(A)) of subunit 2 and heme A of subunit 1 to the active site in subunit 1, a binuclear center (BNC) formed by heme A3 and copper B (CU(B)). The BNC reduces molecular oxygen to 2 water molecules using 4 electrons from cytochrome c in the IMS and 4 protons from the mitochondrial matrix. This is Cytochrome c oxidase subunit 8B, mitochondrial (COX8B) from Carlito syrichta (Philippine tarsier).